A 186-amino-acid chain; its full sequence is ATP-dependent protease subunit HslV (186 aa).

Residue Thr-14 is part of the active site. 3 residues coordinate Na(+): Ala-168, Cys-171, and Thr-174.

The protein belongs to the peptidase T1B family. HslV subfamily. A double ring-shaped homohexamer of HslV is capped on each side by a ring-shaped HslU homohexamer. The assembly of the HslU/HslV complex is dependent on binding of ATP.

It localises to the cytoplasm. The enzyme catalyses ATP-dependent cleavage of peptide bonds with broad specificity.. Allosterically activated by HslU binding. Its function is as follows. Protease subunit of a proteasome-like degradation complex believed to be a general protein degrading machinery. The sequence is that of ATP-dependent protease subunit HslV from Bradyrhizobium sp. (strain BTAi1 / ATCC BAA-1182).